The following is a 259-amino-acid chain: MPEIHPTAVVHPAAEIADDVKIGPFCVVGEHVKLGPGCVLHSHVVIDGPSSFGSGNEFFPFSVIGLKSQDLKYKGEPTYLEVGDNNVFRENATINRATDIGGATRIGNNNLFLVSCHAGHDCQIGNHVIFSGFATAAGHVTVGDYAILAGCCAVHQFVSIGEHAMVGAMARVSQDVLPYTIVEGHPAVTRSVNSIGMQRRGFSEEDLKAVRMCYKKLFVNKKLTVHEALEELRHSGYAENACLRRIIQFVETSERGFCH.

It belongs to the transferase hexapeptide repeat family. LpxA subfamily. In terms of assembly, homotrimer.

It localises to the cytoplasm. The catalysed reaction is a (3R)-hydroxyacyl-[ACP] + UDP-N-acetyl-alpha-D-glucosamine = a UDP-3-O-[(3R)-3-hydroxyacyl]-N-acetyl-alpha-D-glucosamine + holo-[ACP]. It functions in the pathway glycolipid biosynthesis; lipid IV(A) biosynthesis; lipid IV(A) from (3R)-3-hydroxytetradecanoyl-[acyl-carrier-protein] and UDP-N-acetyl-alpha-D-glucosamine: step 1/6. Its function is as follows. Involved in the biosynthesis of lipid A, a phosphorylated glycolipid that anchors the lipopolysaccharide to the outer membrane of the cell. This is Acyl-[acyl-carrier-protein]--UDP-N-acetylglucosamine O-acyltransferase from Akkermansia muciniphila (strain ATCC BAA-835 / DSM 22959 / JCM 33894 / BCRC 81048 / CCUG 64013 / CIP 107961 / Muc).